A 135-amino-acid chain; its full sequence is Sex-regulated protein janus-A (135 aa).

K37 lines the substrate pocket. H63 serves as the catalytic Proton acceptor. 104 to 106 (SQG) lines the substrate pocket.

The protein belongs to the janus family.

In terms of biological role, janA and janB regulate somatic sex differentiation. The sequence is that of Sex-regulated protein janus-A (janA) from Drosophila mauritiana (Fruit fly).